Here is a 416-residue protein sequence, read N- to C-terminus: UDP-N-acetylmuramoylalanine--D-glutamate ligase (416 aa).

104 to 110 (GSNGKST) is an ATP binding site.

The protein belongs to the MurCDEF family.

It is found in the cytoplasm. It carries out the reaction UDP-N-acetyl-alpha-D-muramoyl-L-alanine + D-glutamate + ATP = UDP-N-acetyl-alpha-D-muramoyl-L-alanyl-D-glutamate + ADP + phosphate + H(+). It participates in cell wall biogenesis; peptidoglycan biosynthesis. Functionally, cell wall formation. Catalyzes the addition of glutamate to the nucleotide precursor UDP-N-acetylmuramoyl-L-alanine (UMA). In Francisella tularensis subsp. holarctica (strain FTNF002-00 / FTA), this protein is UDP-N-acetylmuramoylalanine--D-glutamate ligase.